Reading from the N-terminus, the 337-residue chain is Protein LEG1 homolog (337 aa).

Positions 1–20 (MAVLASWVWVLAGCFCAAVA) are cleaved as a signal peptide. Asn171 carries an N-linked (GlcNAc...) asparagine glycan.

This sequence belongs to the LEG1 family.

It is found in the secreted. In terms of biological role, may be involved in early liver development. This Mus musculus (Mouse) protein is Protein LEG1 homolog.